Here is a 264-residue protein sequence, read N- to C-terminus: Thymidylate synthase (264 aa).

Arg21 serves as a coordination point for dUMP. (6R)-5,10-methylene-5,6,7,8-tetrahydrofolate is bound at residue His51. Position 126–127 (126–127 (RR)) interacts with dUMP. The Nucleophile role is filled by Cys146. DUMP is bound by residues 166-169 (RSAD), Asn177, and 207-209 (HIY). Asp169 lines the (6R)-5,10-methylene-5,6,7,8-tetrahydrofolate pocket. Residue Ser263 participates in (6R)-5,10-methylene-5,6,7,8-tetrahydrofolate binding.

This sequence belongs to the thymidylate synthase family. Bacterial-type ThyA subfamily. Homodimer.

It localises to the cytoplasm. It catalyses the reaction dUMP + (6R)-5,10-methylene-5,6,7,8-tetrahydrofolate = 7,8-dihydrofolate + dTMP. It participates in pyrimidine metabolism; dTTP biosynthesis. Its function is as follows. Catalyzes the reductive methylation of 2'-deoxyuridine-5'-monophosphate (dUMP) to 2'-deoxythymidine-5'-monophosphate (dTMP) while utilizing 5,10-methylenetetrahydrofolate (mTHF) as the methyl donor and reductant in the reaction, yielding dihydrofolate (DHF) as a by-product. This enzymatic reaction provides an intracellular de novo source of dTMP, an essential precursor for DNA biosynthesis. The sequence is that of Thymidylate synthase from Bacillus pumilus (strain SAFR-032).